The following is a 98-amino-acid chain: NADH-ubiquinone oxidoreductase chain 4L (98 aa).

3 consecutive transmembrane segments (helical) span residues 1–21, 29–49, and 61–81; these read MSMVYANIFLAFIMSLMGLLM, SLLCLEGMMLSLFVMMTATIL, and IILLVFAACEAALGLSLLVTV.

Belongs to the complex I subunit 4L family. As to quaternary structure, core subunit of respiratory chain NADH dehydrogenase (Complex I) which is composed of 45 different subunits.

Its subcellular location is the mitochondrion inner membrane. It carries out the reaction a ubiquinone + NADH + 5 H(+)(in) = a ubiquinol + NAD(+) + 4 H(+)(out). In terms of biological role, core subunit of the mitochondrial membrane respiratory chain NADH dehydrogenase (Complex I) which catalyzes electron transfer from NADH through the respiratory chain, using ubiquinone as an electron acceptor. Part of the enzyme membrane arm which is embedded in the lipid bilayer and involved in proton translocation. In Pusa caspica (Caspian seal), this protein is NADH-ubiquinone oxidoreductase chain 4L (MT-ND4L).